A 334-amino-acid polypeptide reads, in one-letter code: Dipeptide transport ATP-binding protein DppF (334 aa).

An ABC transporter domain is found at 13–262; the sequence is LQAIDLKKHY…PRHPYTQALL (250 aa). 55-62 serves as a coordination point for ATP; sequence GESGCGKS.

Belongs to the ABC transporter superfamily. As to quaternary structure, the complex is composed of two ATP-binding proteins (DppD and DppF), two transmembrane proteins (DppB and DppC) and a solute-binding protein (DppA). MppA can replace DppA as binding protein for heme and ALA transport.

It localises to the cell inner membrane. The enzyme catalyses a dipeptide(out) + ATP + H2O = a dipeptide(in) + ADP + phosphate + H(+). Part of the ABC transporter DppABCDF involved in dipeptide transport. Responsible for energy coupling to the transport system. In terms of biological role, when a foreign outer membrane heme receptor is expressed in E.coli, DppABCDF can also transport heme and its precursor, 5-aminolevulinic acid (ALA), from the periplasm into the cytoplasm. This is Dipeptide transport ATP-binding protein DppF (dppF) from Escherichia coli (strain K12).